Consider the following 118-residue polypeptide: Integration host factor subunit alpha (118 aa).

Positions 97-118 (NGAMPMSTEESDENTAQSASGG) are disordered.

Belongs to the bacterial histone-like protein family. In terms of assembly, heterodimer of an alpha and a beta chain.

Functionally, this protein is one of the two subunits of integration host factor, a specific DNA-binding protein that functions in genetic recombination as well as in transcriptional and translational control. The sequence is that of Integration host factor subunit alpha from Rhodopseudomonas palustris (strain ATCC BAA-98 / CGA009).